The following is a 510-amino-acid chain: Probable serine/threonine-protein kinase 2 (510 aa).

Residues 111 to 364 enclose the Protein kinase domain; it reads YVLNKKIGKG…ALQALGHQWF (254 aa). Residues 117–125 and Lys140 contribute to the ATP site; that span reads IGKGSFSTA. Asp230 (proton acceptor) is an active-site residue. The tract at residues 408–428 is disordered; that stretch reads NDDIYNNNNNNNQLDPNKNHK.

It belongs to the protein kinase superfamily. Ser/Thr protein kinase family.

It is found in the membrane. It catalyses the reaction L-seryl-[protein] + ATP = O-phospho-L-seryl-[protein] + ADP + H(+). The enzyme catalyses L-threonyl-[protein] + ATP = O-phospho-L-threonyl-[protein] + ADP + H(+). The protein is Probable serine/threonine-protein kinase 2 (PK2) of Plasmodium falciparum (isolate K1 / Thailand).